Consider the following 120-residue polypeptide: Large ribosomal subunit protein uL18 (120 aa).

It belongs to the universal ribosomal protein uL18 family. Part of the 50S ribosomal subunit; part of the 5S rRNA/L5/L18/L25 subcomplex. Contacts the 5S and 23S rRNAs.

This is one of the proteins that bind and probably mediate the attachment of the 5S RNA into the large ribosomal subunit, where it forms part of the central protuberance. The chain is Large ribosomal subunit protein uL18 from Sinorhizobium medicae (strain WSM419) (Ensifer medicae).